A 217-amino-acid polypeptide reads, in one-letter code: MRLRHKPYAMDRINEYSHIVIGNPEERAGNWKEVFGNEQPIHIEVGTGRGRFMYDMAKANPHINYIGIEKFTSVVVDALDKLIEEEVPNLKLINKDAEDLTVFFAKGEIDRVYLNFSDPWPKKRHTKRRLTYKTFLRNYEEVLVEGGEIHFKTDNQGLFEYSLMSMAEYGMLLTYLSLDLHNSDFEGNIMTEYEEKFSSKGHRIYRVEAKYRTEPMQ.

4 residues coordinate S-adenosyl-L-methionine: Glu44, Glu69, Asp96, and Asp118. Asp118 is an active-site residue. Substrate-binding positions include Lys122, Asp154, and 191-194 (TEYE).

It belongs to the class I-like SAM-binding methyltransferase superfamily. TrmB family.

The enzyme catalyses guanosine(46) in tRNA + S-adenosyl-L-methionine = N(7)-methylguanosine(46) in tRNA + S-adenosyl-L-homocysteine. It functions in the pathway tRNA modification; N(7)-methylguanine-tRNA biosynthesis. Functionally, catalyzes the formation of N(7)-methylguanine at position 46 (m7G46) in tRNA. The chain is tRNA (guanine-N(7)-)-methyltransferase from Bacillus cereus (strain G9842).